The primary structure comprises 967 residues: Leucine--tRNA ligase (967 aa).

The short motif at 43-53 (PYLSGHLHVGH) is the 'HIGH' region element. A 'KMSKS' region motif is present at residues 650–654 (KMSKS). ATP is bound at residue Lys-653.

The protein belongs to the class-I aminoacyl-tRNA synthetase family.

The protein resides in the cytoplasm. It carries out the reaction tRNA(Leu) + L-leucine + ATP = L-leucyl-tRNA(Leu) + AMP + diphosphate. The protein is Leucine--tRNA ligase of Pyrococcus horikoshii (strain ATCC 700860 / DSM 12428 / JCM 9974 / NBRC 100139 / OT-3).